The sequence spans 226 residues: Enolase-phosphatase E1 (226 aa).

This sequence belongs to the HAD-like hydrolase superfamily. MasA/MtnC family. Monomer. Requires Mg(2+) as cofactor.

The enzyme catalyses 5-methylsulfanyl-2,3-dioxopentyl phosphate + H2O = 1,2-dihydroxy-5-(methylsulfanyl)pent-1-en-3-one + phosphate. Its pathway is amino-acid biosynthesis; L-methionine biosynthesis via salvage pathway; L-methionine from S-methyl-5-thio-alpha-D-ribose 1-phosphate: step 3/6. The protein operates within amino-acid biosynthesis; L-methionine biosynthesis via salvage pathway; L-methionine from S-methyl-5-thio-alpha-D-ribose 1-phosphate: step 4/6. Its function is as follows. Bifunctional enzyme that catalyzes the enolization of 2,3-diketo-5-methylthiopentyl-1-phosphate (DK-MTP-1-P) into the intermediate 2-hydroxy-3-keto-5-methylthiopentenyl-1-phosphate (HK-MTPenyl-1-P), which is then dephosphorylated to form the acireductone 1,2-dihydroxy-3-keto-5-methylthiopentene (DHK-MTPene). The protein is Enolase-phosphatase E1 of Shewanella baltica (strain OS155 / ATCC BAA-1091).